The primary structure comprises 521 residues: Aspartic proteinase yapsin-1 (521 aa).

The signal sequence occupies residues 1-17; it reads MRIWILIFFSFIKLVSS. Residues 18–500 are Extracellular-facing; that stretch reads LQYTGNGVLA…NAVANAGNSF (483 aa). Positions 67-409 constitute a Peptidase A1 domain; that stretch reads YTTTLSIGRP…HQSQKMIAIG (343 aa). D85 is a catalytic residue. N-linked (GlcNAc...) asparagine glycans are attached at residues N136, N157, N250, N289, N295, N354, N414, N418, N460, and N484. Residues 501 to 521 traverse the membrane as a helical segment; the sequence is SPLSAMVIMMMSAVFLGLGII.

The protein belongs to the peptidase A1 family.

The protein localises to the endoplasmic reticulum membrane. The protein resides in the secreted. Its subcellular location is the cell wall. Cleaves at paired basic residues. This is Aspartic proteinase yapsin-1 (yps1) from Schizosaccharomyces pombe (strain 972 / ATCC 24843) (Fission yeast).